Here is a 130-residue protein sequence, read N- to C-terminus: Small ribosomal subunit protein uS11 (130 aa).

Belongs to the universal ribosomal protein uS11 family. As to quaternary structure, part of the 30S ribosomal subunit. Interacts with proteins S7 and S18. Binds to IF-3.

Located on the platform of the 30S subunit, it bridges several disparate RNA helices of the 16S rRNA. Forms part of the Shine-Dalgarno cleft in the 70S ribosome. The protein is Small ribosomal subunit protein uS11 of Aliarcobacter butzleri (strain RM4018) (Arcobacter butzleri).